The primary structure comprises 259 residues: AA9 family lytic polysaccharide monooxygenase E (259 aa).

A signal peptide spans 1–20 (MKATVLAGLAAVIAAQGVAG). Cu(2+) is bound by residues H21 and H99. C69 and C193 are joined by a disulfide. Residues H179 and Q188 each coordinate O2. Y190 is a binding site for Cu(2+).

Belongs to the polysaccharide monooxygenase AA9 family. The cofactor is Cu(2+).

The protein resides in the secreted. The catalysed reaction is [(1-&gt;4)-beta-D-glucosyl]n+m + reduced acceptor + O2 = 4-dehydro-beta-D-glucosyl-[(1-&gt;4)-beta-D-glucosyl]n-1 + [(1-&gt;4)-beta-D-glucosyl]m + acceptor + H2O.. Lytic polysaccharide monooxygenase (LPMO) that depolymerizes crystalline and amorphous polysaccharides via the oxidation of scissile alpha- or beta-(1-4)-glycosidic bonds, yielding C1 or C4 oxidation products. Catalysis by LPMOs requires the reduction of the active-site copper from Cu(II) to Cu(I) by a reducing agent and H(2)O(2) or O(2) as a cosubstrate. This is AA9 family lytic polysaccharide monooxygenase E from Malbranchea cinnamomea (Thermophilic fungus).